The sequence spans 523 residues: 2-isopropylmalate synthase (523 aa).

One can recognise a Pyruvate carboxyltransferase domain in the interval 5–267 (VIIFDTTLRD…HTAINHQEIW (263 aa)). Residues aspartate 14, histidine 202, histidine 204, and asparagine 238 each contribute to the Mn(2+) site. Positions 392–523 (RLDYFSVQSG…QHNENNKETV (132 aa)) are regulatory domain.

This sequence belongs to the alpha-IPM synthase/homocitrate synthase family. LeuA type 1 subfamily. Homodimer. Requires Mn(2+) as cofactor.

It localises to the cytoplasm. It carries out the reaction 3-methyl-2-oxobutanoate + acetyl-CoA + H2O = (2S)-2-isopropylmalate + CoA + H(+). It functions in the pathway amino-acid biosynthesis; L-leucine biosynthesis; L-leucine from 3-methyl-2-oxobutanoate: step 1/4. Its function is as follows. Catalyzes the condensation of the acetyl group of acetyl-CoA with 3-methyl-2-oxobutanoate (2-ketoisovalerate) to form 3-carboxy-3-hydroxy-4-methylpentanoate (2-isopropylmalate). This chain is 2-isopropylmalate synthase, found in Escherichia coli O127:H6 (strain E2348/69 / EPEC).